The primary structure comprises 152 residues: MGEKLICNNKKAYHDYFIEEKMEAGLVLLGTEVKSLRAGKANLNDSFMLVRDGEAFLHNLHISPYEFGNRQNHQADRNRKLLLHRKQIDRLYGRIREQGYSIVPLRMYFKDGLVKVEIGLAKGKKLYDKREDMKKKDSQRELSQALKSKNRE.

Basic and acidic residues predominate over residues 129–140; sequence KREDMKKKDSQR. The interval 129–152 is disordered; it reads KREDMKKKDSQRELSQALKSKNRE. Polar residues predominate over residues 141-152; it reads ELSQALKSKNRE.

The protein belongs to the SmpB family.

The protein localises to the cytoplasm. In terms of biological role, required for rescue of stalled ribosomes mediated by trans-translation. Binds to transfer-messenger RNA (tmRNA), required for stable association of tmRNA with ribosomes. tmRNA and SmpB together mimic tRNA shape, replacing the anticodon stem-loop with SmpB. tmRNA is encoded by the ssrA gene; the 2 termini fold to resemble tRNA(Ala) and it encodes a 'tag peptide', a short internal open reading frame. During trans-translation Ala-aminoacylated tmRNA acts like a tRNA, entering the A-site of stalled ribosomes, displacing the stalled mRNA. The ribosome then switches to translate the ORF on the tmRNA; the nascent peptide is terminated with the 'tag peptide' encoded by the tmRNA and targeted for degradation. The ribosome is freed to recommence translation, which seems to be the essential function of trans-translation. The sequence is that of SsrA-binding protein from Pelobacter propionicus (strain DSM 2379 / NBRC 103807 / OttBd1).